The sequence spans 338 residues: Protein REG2 (338 aa).

Positions 1–21 (MTLSNCDSLDNLFQDPPEEEE) are disordered.

Its function is as follows. Regulatory subunit, binds to type-1 protein phosphatase. Functions with HEX2/REG1 and SNF1 protein kinase to regulate growth. Might regulate SNF1 directly or indirectly. The protein is Protein REG2 (REG2) of Saccharomyces cerevisiae (strain ATCC 204508 / S288c) (Baker's yeast).